A 156-amino-acid chain; its full sequence is Small ribosomal subunit protein uS7 (156 aa).

The protein belongs to the universal ribosomal protein uS7 family. In terms of assembly, part of the 30S ribosomal subunit. Contacts proteins S9 and S11.

Its function is as follows. One of the primary rRNA binding proteins, it binds directly to 16S rRNA where it nucleates assembly of the head domain of the 30S subunit. Is located at the subunit interface close to the decoding center, probably blocks exit of the E-site tRNA. This chain is Small ribosomal subunit protein uS7, found in Magnetococcus marinus (strain ATCC BAA-1437 / JCM 17883 / MC-1).